A 242-amino-acid chain; its full sequence is UPF0246 protein SPN23F15130 (242 aa).

This sequence belongs to the UPF0246 family.

The sequence is that of UPF0246 protein SPN23F15130 from Streptococcus pneumoniae (strain ATCC 700669 / Spain 23F-1).